Consider the following 161-residue polypeptide: Large ribosomal subunit protein uL15 (161 aa).

The disordered stretch occupies residues 1-41 (MTKLNELAPAPGSTKGRMRVGRGPGSGKGKTAGRGVKGQKA). The segment covering 22 to 36 (RGPGSGKGKTAGRGV) has biased composition (gly residues).

Belongs to the universal ribosomal protein uL15 family. As to quaternary structure, part of the 50S ribosomal subunit.

Functionally, binds to the 23S rRNA. In Caulobacter sp. (strain K31), this protein is Large ribosomal subunit protein uL15.